Reading from the N-terminus, the 380-residue chain is MNKENNKEGQGDALRVIISGGGTGGHIFPAVSIANAIKELRPDAQILFVGAEGRMEMQRVPDAGYQIIGLPVAGFDRKHLWKNVAVLLKLVRSQWKARNIIRQFRPQVAVGVGGYASGPTLKMAGMMGVPTLIQEQNSYAGVTNKLLAQKARRICVAYDGMEKFFPANKIIMTGNPVRQNLLAEKPEREQAIRSFGLNPEKKTILILGGSLGARTINNTLIAGLQLIRRTTDVQFIWQTGKIYHQQVTEAVKAAGEIPNLFVTDFIKDMAAAYAAADLVISRAGAGSISEFCLLNKPVILVPSPNVAEDHQTKNALALVNKQAAIYVKDAEAENKLLPVALETIANAEKLSELSENIAHLALPDSAVVIAKEVIKLAQQS.

Residues 23-25 (TGG), asparagine 137, arginine 178, serine 210, isoleucine 266, and glutamine 311 contribute to the UDP-N-acetyl-alpha-D-glucosamine site.

Belongs to the glycosyltransferase 28 family. MurG subfamily.

It localises to the cell inner membrane. It carries out the reaction di-trans,octa-cis-undecaprenyl diphospho-N-acetyl-alpha-D-muramoyl-L-alanyl-D-glutamyl-meso-2,6-diaminopimeloyl-D-alanyl-D-alanine + UDP-N-acetyl-alpha-D-glucosamine = di-trans,octa-cis-undecaprenyl diphospho-[N-acetyl-alpha-D-glucosaminyl-(1-&gt;4)]-N-acetyl-alpha-D-muramoyl-L-alanyl-D-glutamyl-meso-2,6-diaminopimeloyl-D-alanyl-D-alanine + UDP + H(+). Its pathway is cell wall biogenesis; peptidoglycan biosynthesis. In terms of biological role, cell wall formation. Catalyzes the transfer of a GlcNAc subunit on undecaprenyl-pyrophosphoryl-MurNAc-pentapeptide (lipid intermediate I) to form undecaprenyl-pyrophosphoryl-MurNAc-(pentapeptide)GlcNAc (lipid intermediate II). This is UDP-N-acetylglucosamine--N-acetylmuramyl-(pentapeptide) pyrophosphoryl-undecaprenol N-acetylglucosamine transferase from Bacteroides fragilis (strain ATCC 25285 / DSM 2151 / CCUG 4856 / JCM 11019 / LMG 10263 / NCTC 9343 / Onslow / VPI 2553 / EN-2).